The chain runs to 587 residues: Leucine-rich repeat-containing protein 63 (587 aa).

LRR repeat units lie at residues glutamine 251–arginine 274, alanine 344–leucine 367, lysine 368–leucine 390, phenylalanine 392–leucine 413, serine 414–leucine 436, arginine 437–leucine 459, and leucine 487–glutamate 510.

This Homo sapiens (Human) protein is Leucine-rich repeat-containing protein 63 (LRRC63).